Consider the following 324-residue polypeptide: Probable UDP-sugar transporter protein SLC35A4 (324 aa).

Topologically, residues 1–18 (MSVEDGGLPGLGGPGQAR) are cytoplasmic. A helical transmembrane segment spans residues 19-39 (WTLMLLLSTATYGAHAPLLAL). Residues 40 to 52 (CHVDGRVPFRPSS) are Lumenal-facing. A helical membrane pass occupies residues 53–73 (AVLLTELTKLLLCALSLLVGW). Topologically, residues 74–85 (QAWPPRTPPWRQ) are cytoplasmic. A helical membrane pass occupies residues 86-106 (AAPFALSALLYGANNNLVIHL). The Lumenal portion of the chain corresponds to 107–140 (QHYMDPSTYQVLSNLKIGSTALFYCLCLRRRLSA). Residues 141–161 (RQGLALLLLMAAGACYAAGGL) traverse the membrane as a helical segment. Over 162-177 (RDPGSPLPESPSTAAS) the chain is Cytoplasmic. The helical transmembrane segment at 178-198 (GPVPLHVTAPGLLLLLLYCLI) threads the bilayer. At 199–214 (SGLSSVYTELLLKRQR) the chain is on the lumenal side. A helical membrane pass occupies residues 215-235 (LPLALQNLFLYTFGVLLNLGL). Residues 236–248 (HAGGGPGPGLLEG) lie on the Cytoplasmic side of the membrane. Residues 249–271 (FSGWAALVVLSQALNGLLMSAVM) traverse the membrane as a helical segment. At 272 to 279 (KHGSSITR) the chain is on the lumenal side. Residues 280-300 (LFVVSCSLVVNAVLSAALLRL) form a helical membrane-spanning segment. At 301–324 (QLTAAFFLAALLIGLAVHLYYGSR) the chain is on the cytoplasmic side.

The protein belongs to the nucleotide-sugar transporter family. SLC35A subfamily. Found in a complex with SLC35A2 and SLC35A3.

The protein localises to the golgi apparatus membrane. It catalyses the reaction CDP-L-ribitol(in) + CDP(out) = CDP-L-ribitol(out) + CDP(in). Mediates the transport of CDP-ribitol. Does not exhibit CMP-sialic acid, UDP-galactose and UDP-N-acetylglucosamine transport activity. In Sus scrofa (Pig), this protein is Probable UDP-sugar transporter protein SLC35A4.